The chain runs to 561 residues: Arginine--tRNA ligase (561 aa).

The short motif at 129–139 is the 'HIGH' region element; it reads ANPTGPLHVGH.

It belongs to the class-I aminoacyl-tRNA synthetase family. Monomer.

It localises to the cytoplasm. It catalyses the reaction tRNA(Arg) + L-arginine + ATP = L-arginyl-tRNA(Arg) + AMP + diphosphate. The chain is Arginine--tRNA ligase from Bordetella parapertussis (strain 12822 / ATCC BAA-587 / NCTC 13253).